A 395-amino-acid chain; its full sequence is Thyroid hormone receptor beta (395 aa).

Residues 1–31 (MSEPAENCSPRWKDEAIQNGYIPSYLDKDEL) are modulating. Residues Cys32, Cys35, Cys49, Cys52, Cys70, Cys76, Cys86, and Cys89 each contribute to the Zn(2+) site. 2 NR C4-type zinc fingers span residues 32-52 (CVVCGDKATGYHYRCITCEGC) and 70-94 (CKYEGKCVIDKVTRNQCQECRFKKC). The nuclear receptor DNA-binding region spans 32 to 99 (CVVCGDKATG…RFKKCIAVGM (68 aa)). Positions 142–395 (EEWDLIRMVT…PPLFLEVFED (254 aa)) constitute an NR LBD domain. Arg216, Asn265, and His369 together coordinate 3,3',5-triiodo-L-thyronine. Residues Arg216, Asn265, and His369 each coordinate L-thyroxine.

The protein belongs to the nuclear hormone receptor family. NR1 subfamily.

It is found in the nucleus. Functionally, nuclear hormone receptor that can act as a repressor or activator of transcription. High affinity receptor for thyroid hormones, including triiodothyronine and thyroxine. This is Thyroid hormone receptor beta (thrb) from Paralichthys olivaceus (Bastard halibut).